The following is a 233-amino-acid chain: Purine nucleoside phosphorylase DeoD-type (233 aa).

An a purine D-ribonucleoside-binding site is contributed by histidine 4. Phosphate is bound by residues glycine 20, arginine 24, arginine 43, and 87 to 90 (RIGT). A purine D-ribonucleoside contacts are provided by residues 179–181 (EME) and 203–204 (SD). The active-site Proton donor is the aspartate 204.

It belongs to the PNP/UDP phosphorylase family. As to quaternary structure, homohexamer; trimer of homodimers.

The enzyme catalyses a purine D-ribonucleoside + phosphate = a purine nucleobase + alpha-D-ribose 1-phosphate. It carries out the reaction a purine 2'-deoxy-D-ribonucleoside + phosphate = a purine nucleobase + 2-deoxy-alpha-D-ribose 1-phosphate. Its function is as follows. Catalyzes the reversible phosphorolytic breakdown of the N-glycosidic bond in the beta-(deoxy)ribonucleoside molecules, with the formation of the corresponding free purine bases and pentose-1-phosphate. The sequence is that of Purine nucleoside phosphorylase DeoD-type from Helicobacter pylori (strain J99 / ATCC 700824) (Campylobacter pylori J99).